We begin with the raw amino-acid sequence, 299 residues long: Bifunctional protein FolD (299 aa).

NADP(+) contacts are provided by residues 168–170 (GRS), S193, and I234.

Belongs to the tetrahydrofolate dehydrogenase/cyclohydrolase family. In terms of assembly, homodimer.

The enzyme catalyses (6R)-5,10-methylene-5,6,7,8-tetrahydrofolate + NADP(+) = (6R)-5,10-methenyltetrahydrofolate + NADPH. It carries out the reaction (6R)-5,10-methenyltetrahydrofolate + H2O = (6R)-10-formyltetrahydrofolate + H(+). The protein operates within one-carbon metabolism; tetrahydrofolate interconversion. Catalyzes the oxidation of 5,10-methylenetetrahydrofolate to 5,10-methenyltetrahydrofolate and then the hydrolysis of 5,10-methenyltetrahydrofolate to 10-formyltetrahydrofolate. This is Bifunctional protein FolD from Bartonella bacilliformis (strain ATCC 35685 / KC583 / Herrer 020/F12,63).